We begin with the raw amino-acid sequence, 836 residues long: Protein O-mannosyl-transferase TMTC2 (836 aa).

Residues 1-21 (MIAELVSSALGLALYLNTLSA) traverse the membrane as a helical segment. Residues 22–84 (DFCYDDSRAI…LNHAIGGLNP (63 aa)) lie on the Extracellular side of the membrane. Residues 85–105 (WSYHLVNVLLHAAVTGLFTSF) traverse the membrane as a helical segment. Residues 106–107 (SK) lie on the Cytoplasmic side of the membrane. The helical transmembrane segment at 108 to 128 (ILLGDGYWTFMAGLMFASHPI) threads the bilayer. Over 129–132 (HTEA) the chain is Extracellular. The helical transmembrane segment at 133–153 (VAGIVGRADVGASLFFLLSLL) threads the bilayer. Residues 154-162 (CYIKHCSTR) are Cytoplasmic-facing. The next 2 membrane-spanning stretches (helical) occupy residues 163–184 (GYSA…CSML) and 185–204 (WKEQ…VFVF). Topologically, residues 205 to 220 (HRLKIKQILPTIYKRK) are cytoplasmic. The helical transmembrane segment at 221–241 (NLSLFLSISLLIFWGSSLLGA) threads the bilayer. Residues 242–312 (RLYWMGNKPP…KTVCDWRNLH (71 aa)) are Extracellular-facing. Residues 313 to 333 (TVAFYTGLLLLAYYGLKSPSV) traverse the membrane as a helical segment. Over 334-399 (DRECNGKTVT…TENIVVLSLS (66 aa)) the chain is Cytoplasmic. The helical transmembrane segment at 400–420 (LLIIPFVPATNLFFYVGFVIA) threads the bilayer. Residues 421–422 (ER) are Extracellular-facing. Residues 423-443 (VLYIPSMGFCLLITVGARALY) traverse the membrane as a helical segment. Residues 444–449 (VKVQKR) lie on the Cytoplasmic side of the membrane. A helical transmembrane segment spans residues 450–470 (FLKSLIFYATATLIVFYGLKT). The Extracellular segment spans residues 471–836 (AIRNGDWQNE…EKQGLKTSKT (366 aa)). TPR repeat units follow at residues 493 to 526 (AKAW…RSNM), 527 to 560 (ADML…RPTL), 561 to 594 (ASAY…PDEN), 606 to 639 (TSCL…MPRQ), 643 to 676 (QSLY…KTDH), 677 to 710 (IPAH…DPTK), 711 to 744 (GNCY…DSTE), 745 to 778 (FDVV…RPNY), and 779 to 812 (PAAL…KPDD).

The protein belongs to the TMTC family.

The protein resides in the membrane. It is found in the endoplasmic reticulum. It catalyses the reaction a di-trans,poly-cis-dolichyl beta-D-mannosyl phosphate + L-seryl-[protein] = 3-O-(alpha-D-mannosyl)-L-seryl-[protein] + a di-trans,poly-cis-dolichyl phosphate + H(+). The catalysed reaction is a di-trans,poly-cis-dolichyl beta-D-mannosyl phosphate + L-threonyl-[protein] = 3-O-(alpha-D-mannosyl)-L-threonyl-[protein] + a di-trans,poly-cis-dolichyl phosphate + H(+). Its pathway is protein modification; protein glycosylation. Transfers mannosyl residues to the hydroxyl group of serine or threonine residues. The 4 members of the TMTC family are O-mannosyl-transferases dedicated primarily to the cadherin superfamily, each member seems to have a distinct role in decorating the cadherin domains with O-linked mannose glycans at specific regions. Also acts as O-mannosyl-transferase on other proteins such as PDIA3. The chain is Protein O-mannosyl-transferase TMTC2 from Homo sapiens (Human).